The chain runs to 108 residues: T-cell acute lymphocytic leukemia protein 2 (108 aa).

The 53-residue stretch at 2 to 54 folds into the bHLH domain; sequence TRKIFTNTRERWRQQNVNSAFAKLRKLIPTHPPDKKLSKNETLRLAMRYINFL. Residues 89 to 108 are disordered; the sequence is DRTLLENYQVPSPGPSHHIP.

The polypeptide is T-cell acute lymphocytic leukemia protein 2 (TAL2) (Homo sapiens (Human)).